Reading from the N-terminus, the 310-residue chain is Alpha/beta hydrolase domain-containing protein 17C (310 aa).

Residues Ser-192, Asp-257, and His-286 each act as charge relay system in the active site.

The protein belongs to the AB hydrolase superfamily. ABHD17 family. In terms of processing, palmitoylated on cysteine residues located in a cysteine cluster at the N-terminus which promotes membrane localization.

The protein resides in the recycling endosome membrane. It is found in the cell projection. The protein localises to the dendritic spine. Its subcellular location is the postsynaptic density membrane. The catalysed reaction is S-hexadecanoyl-L-cysteinyl-[protein] + H2O = L-cysteinyl-[protein] + hexadecanoate + H(+). Hydrolyzes fatty acids from S-acylated cysteine residues in proteins. The polypeptide is Alpha/beta hydrolase domain-containing protein 17C (Xenopus tropicalis (Western clawed frog)).